We begin with the raw amino-acid sequence, 184 residues long: ADP-ribosylation factor-like protein 2 (184 aa).

Gly-2 carries N-myristoyl glycine lipidation. Gly-23 to Thr-30 provides a ligand contact to GTP. Ser-45 is subject to Phosphoserine. GTP contacts are provided by residues Asp-66–Gln-70 and Gly-68. A Glycyl lysine isopeptide (Lys-Gly) (interchain with G-Cter in ubiquitin) cross-link involves residue Lys-71. Residue Asn-125–Asp-128 coordinates GTP.

It belongs to the small GTPase superfamily. Arf family. As to quaternary structure, interacts with ELMOD2. Interacts with ARL2BP; the GTP-bound form interacts with ARL2BP. The GDP-bound form interacts preferentially with TBCD. Interacts with UNC119. Found in a complex with ARL2, ARL2BP and SLC25A4. The GTP-bound form interacts with PDE6D. Found in a complex with ARL2, ARL2BP and SLC25A6. Found in a complex with at least ARL2, PPP2CB, PPP2R1A, PPP2R2A, PPP2R5E and TBCD. In terms of processing, not N-myristoylated. In terms of tissue distribution, expressed in liver and retina (at protein level).

It localises to the nucleus. It is found in the mitochondrion intermembrane space. The protein localises to the cytoplasm. The protein resides in the cytoskeleton. Its subcellular location is the microtubule organizing center. It localises to the centrosome. It is found in the mitochondrion. Small GTP-binding protein which cycles between an inactive GDP-bound and an active GTP-bound form, and the rate of cycling is regulated by guanine nucleotide exchange factors (GEF) and GTPase-activating proteins (GAP). GTP-binding protein that does not act as an allosteric activator of the cholera toxin catalytic subunit. Regulates formation of new microtubules and centrosome integrity. Prevents the TBCD-induced microtubule destruction. Participates in association with TBCD, in the disassembly of the apical junction complexes. Antagonizes the effect of TBCD on epithelial cell detachment and tight and adherens junctions disassembly. Together with ARL2, plays a role in the nuclear translocation, retention and transcriptional activity of STAT3. Component of a regulated secretory pathway involved in Ca(2+)-dependent release of acetylcholine. Required for normal progress through the cell cycle. The sequence is that of ADP-ribosylation factor-like protein 2 (ARL2) from Bos taurus (Bovine).